The following is a 169-amino-acid chain: 6,7-dimethyl-8-ribityllumazine synthase (169 aa).

5-amino-6-(D-ribitylamino)uracil-binding positions include phenylalanine 24, 58 to 60 (ALE), and 82 to 84 (AVI). 87 to 88 (ET) provides a ligand contact to (2S)-2-hydroxy-3-oxobutyl phosphate. Residue histidine 90 is the Proton donor of the active site. Asparagine 115 provides a ligand contact to 5-amino-6-(D-ribitylamino)uracil. Arginine 129 is a (2S)-2-hydroxy-3-oxobutyl phosphate binding site.

This sequence belongs to the DMRL synthase family.

The enzyme catalyses (2S)-2-hydroxy-3-oxobutyl phosphate + 5-amino-6-(D-ribitylamino)uracil = 6,7-dimethyl-8-(1-D-ribityl)lumazine + phosphate + 2 H2O + H(+). Its pathway is cofactor biosynthesis; riboflavin biosynthesis; riboflavin from 2-hydroxy-3-oxobutyl phosphate and 5-amino-6-(D-ribitylamino)uracil: step 1/2. In terms of biological role, catalyzes the formation of 6,7-dimethyl-8-ribityllumazine by condensation of 5-amino-6-(D-ribitylamino)uracil with 3,4-dihydroxy-2-butanone 4-phosphate. This is the penultimate step in the biosynthesis of riboflavin. This chain is 6,7-dimethyl-8-ribityllumazine synthase, found in Burkholderia vietnamiensis (strain G4 / LMG 22486) (Burkholderia cepacia (strain R1808)).